The chain runs to 101 residues: Small ribosomal subunit protein bS6 (101 aa).

This sequence belongs to the bacterial ribosomal protein bS6 family.

Functionally, binds together with bS18 to 16S ribosomal RNA. This Oleidesulfovibrio alaskensis (strain ATCC BAA-1058 / DSM 17464 / G20) (Desulfovibrio alaskensis) protein is Small ribosomal subunit protein bS6.